The following is a 197-amino-acid chain: Holliday junction branch migration complex subunit RuvA (197 aa).

The tract at residues 1 to 63 (MFEYLNGKLV…EDAHSLYGFV (63 aa)) is domain I. Residues 64-142 (NESEKALFLR…ATGAVGISLL (79 aa)) are domain II. The interval 142–146 (LDAAP) is flexible linker. A domain III region spans residues 147–197 (ASNLALEEAIEALQALGYKATELKKIEKKLAQEAGLTSEEYIKSALKLMMK).

This sequence belongs to the RuvA family. Homotetramer. Forms an RuvA(8)-RuvB(12)-Holliday junction (HJ) complex. HJ DNA is sandwiched between 2 RuvA tetramers; dsDNA enters through RuvA and exits via RuvB. An RuvB hexamer assembles on each DNA strand where it exits the tetramer. Each RuvB hexamer is contacted by two RuvA subunits (via domain III) on 2 adjacent RuvB subunits; this complex drives branch migration. In the full resolvosome a probable DNA-RuvA(4)-RuvB(12)-RuvC(2) complex forms which resolves the HJ.

The protein resides in the cytoplasm. Its function is as follows. The RuvA-RuvB-RuvC complex processes Holliday junction (HJ) DNA during genetic recombination and DNA repair, while the RuvA-RuvB complex plays an important role in the rescue of blocked DNA replication forks via replication fork reversal (RFR). RuvA specifically binds to HJ cruciform DNA, conferring on it an open structure. The RuvB hexamer acts as an ATP-dependent pump, pulling dsDNA into and through the RuvAB complex. HJ branch migration allows RuvC to scan DNA until it finds its consensus sequence, where it cleaves and resolves the cruciform DNA. The chain is Holliday junction branch migration complex subunit RuvA from Lactococcus lactis subsp. cremoris (strain MG1363).